Consider the following 365-residue polypeptide: UPF0324 membrane protein Cj0999c (365 aa).

The next 11 helical transmembrane spans lie at 12–34 (IVRS…MYLS), 44–63 (HLAA…PWFF), 83–100 (LGIV…LLSV), 105–127 (FLLS…TKIF), 134–153 (SMLV…LALE), 163–185 (GILA…PIAF), 197–219 (AMGV…AEMA), 234–256 (VIIK…YFFA), 269–288 (SITI…LNTY), 303–325 (IISL…LGLQ), and 338–360 (VFGL…TLAF).

Belongs to the UPF0324 family.

The protein localises to the cell membrane. The protein is UPF0324 membrane protein Cj0999c of Campylobacter jejuni subsp. jejuni serotype O:2 (strain ATCC 700819 / NCTC 11168).